The primary structure comprises 218 residues: Small ribosomal subunit protein uS3c (218 aa).

Residues 43–118 (IKNYVQKNPR…RLNIAIARIS (76 aa)) enclose the KH type-2 domain.

It belongs to the universal ribosomal protein uS3 family. In terms of assembly, part of the 30S ribosomal subunit.

The protein resides in the plastid. It is found in the chloroplast. The polypeptide is Small ribosomal subunit protein uS3c (rps3) (Acorus calamus (Sweet flag)).